Reading from the N-terminus, the 61-residue chain is Early 3 Conserved Region 1-alpha protein (61 aa).

The Lumenal segment spans residues 1–14; sequence MSNSSNSTSLSNFS. N3, N6, and N12 each carry an N-linked (GlcNAc...) asparagine; by host glycan. The chain crosses the membrane as a helical span at residues 15-35; sequence GIGVGVILTLVILFILILALL. The Cytoplasmic segment spans residues 36-61; that stretch reads CLRVAACCTHVCTYCQLFKRWGQHPR.

It belongs to the adenoviridae E3-CR1 family. As to quaternary structure, interacts with E3 RID alpha and E3 RID beta. In terms of processing, only 1 of 3 three potential glycosylation sites is glycosylated. Oligosaccharides are not processed from high mannose to the complex type because the protein is retained in the endoplasmic reticulum.

It is found in the host endoplasmic reticulum membrane. The protein localises to the host cell membrane. Functionally, prevents infected cell apoptosis induced by the host immune system. May act by down-regulating host TRAIL receptors. May act in complex with E3 RID alpha and beta. May play a role on cellular apoptosis regulation in the ER. The sequence is that of Early 3 Conserved Region 1-alpha protein from Human adenovirus C serotype 2 (HAdV-2).